The primary structure comprises 420 residues: Sodium-dependent phosphate transport protein 4 (420 aa).

The interval 1–21 is disordered; it reads MATKTELSPTARESKNAQDMQ. N-linked (GlcNAc...) asparagine glycosylation is found at asparagine 49, asparagine 60, asparagine 68, and asparagine 77. Helical transmembrane passes span 126–146, 154–174, 218–238, 256–276, 292–314, 319–341, 357–377, and 385–405; these read SIAL…GGFI, FVFY…FVVI, IWSI…MVVY, LLSA…GYLA, IATI…LNSG, TALL…INVL, GFSS…LSQD, and VFFL…IFGE.

Belongs to the major facilitator superfamily. Sodium/anion cotransporter family. In terms of tissue distribution, expressed in the liver and kidney. It is detected in proximal tubules in renal cortex as well as some tubules and glomeruli, with highest expression at the apical side of proximal tubules (at protein level).

The protein localises to the endoplasmic reticulum membrane. The protein resides in the cell membrane. It catalyses the reaction urate(in) + Na(+)(out) = urate(out) + Na(+)(in). Transports organic anions in a voltage-driven, multispecific, manner, on the apical side of renal proximal tubule. In particular, participates in the secretion of urate from the cell into the lumen. Urate is the end product of purine metabolism. May have roles in the metabolism and secretion of estrone sulfate, estradiol-17-beta-glucuronide, ochratoxin A, as wells as drugs such as bumetanide. This chain is Sodium-dependent phosphate transport protein 4 (SLC17A3), found in Homo sapiens (Human).